A 57-amino-acid polypeptide reads, in one-letter code: Sec-independent protein translocase protein TatAy (57 aa).

Residues 1–21 (MPIGPGSLAVIAIVALIIFGP) form a helical membrane-spanning segment.

Belongs to the TatA/E family. In terms of assembly, forms a complex with TatCy. Two types of complexes exist: one composed of TatAy and TatCy, and another composed only of TatAy. Cytosolic TatA forms large complexes or aggregates.

It localises to the cell membrane. Its subcellular location is the cytoplasm. The protein resides in the cytosol. In terms of biological role, part of the twin-arginine translocation (Tat) system that transports large folded proteins containing a characteristic twin-arginine motif in their signal peptide across membranes. TatA could form the protein-conducting channel of the Tat system. Required for YwbN secretion. The sequence is that of Sec-independent protein translocase protein TatAy from Bacillus subtilis (strain 168).